The primary structure comprises 361 residues: Probable dual-specificity RNA methyltransferase RlmN (361 aa).

The Proton acceptor role is filled by Glu91. In terms of domain architecture, Radical SAM core spans 97–329 (QHYGLSVCVT…KKKGGNCVVR (233 aa)). Cysteines 104 and 340 form a disulfide. [4Fe-4S] cluster-binding residues include Cys111, Cys115, and Cys118. S-adenosyl-L-methionine is bound by residues 163 to 164 (GE), Ser195, 218 to 220 (SLH), and Asn296. Residue Cys340 is the S-methylcysteine intermediate of the active site.

The protein belongs to the radical SAM superfamily. RlmN family. Requires [4Fe-4S] cluster as cofactor.

The protein localises to the cytoplasm. The enzyme catalyses adenosine(2503) in 23S rRNA + 2 reduced [2Fe-2S]-[ferredoxin] + 2 S-adenosyl-L-methionine = 2-methyladenosine(2503) in 23S rRNA + 5'-deoxyadenosine + L-methionine + 2 oxidized [2Fe-2S]-[ferredoxin] + S-adenosyl-L-homocysteine. It catalyses the reaction adenosine(37) in tRNA + 2 reduced [2Fe-2S]-[ferredoxin] + 2 S-adenosyl-L-methionine = 2-methyladenosine(37) in tRNA + 5'-deoxyadenosine + L-methionine + 2 oxidized [2Fe-2S]-[ferredoxin] + S-adenosyl-L-homocysteine. In terms of biological role, specifically methylates position 2 of adenine 2503 in 23S rRNA and position 2 of adenine 37 in tRNAs. This is Probable dual-specificity RNA methyltransferase RlmN from Streptococcus pneumoniae serotype 2 (strain D39 / NCTC 7466).